Reading from the N-terminus, the 73-residue chain is Sec-independent protein translocase protein TatA (73 aa).

A helical transmembrane segment spans residues 1–21 (MGLSWQQLLILLLVVVVIFGT).

Belongs to the TatA/E family. The Tat system comprises two distinct complexes: a TatABC complex, containing multiple copies of TatA, TatB and TatC subunits, and a separate TatA complex, containing only TatA subunits. Substrates initially bind to the TatABC complex, which probably triggers association of the separate TatA complex to form the active translocon.

It is found in the cell inner membrane. Its function is as follows. Part of the twin-arginine translocation (Tat) system that transports large folded proteins containing a characteristic twin-arginine motif in their signal peptide across membranes. TatA could form the protein-conducting channel of the Tat system. The polypeptide is Sec-independent protein translocase protein TatA (Histophilus somni (strain 129Pt) (Haemophilus somnus)).